A 730-amino-acid polypeptide reads, in one-letter code: Polyphosphate kinase (730 aa).

Residues 1-21 (MMRHDRNVTEIDAETRPDENL) are compositionally biased toward basic and acidic residues. A disordered region spans residues 1–39 (MMRHDRNVTEIDAETRPDENLWHSGDSAVGAPPAATPAA). ATP is bound at residue asparagine 86. Mg(2+)-binding residues include arginine 423 and arginine 453. The active-site Phosphohistidine intermediate is histidine 483. Residues tyrosine 516, arginine 612, and histidine 640 each coordinate ATP.

The protein belongs to the polyphosphate kinase 1 (PPK1) family. Requires Mg(2+) as cofactor. An intermediate of this reaction is the autophosphorylated ppk in which a phosphate is covalently linked to a histidine residue through a N-P bond.

It catalyses the reaction [phosphate](n) + ATP = [phosphate](n+1) + ADP. Functionally, catalyzes the reversible transfer of the terminal phosphate of ATP to form a long-chain polyphosphate (polyP). In Mycolicibacterium paratuberculosis (strain ATCC BAA-968 / K-10) (Mycobacterium paratuberculosis), this protein is Polyphosphate kinase.